Reading from the N-terminus, the 248-residue chain is 3-deoxy-manno-octulosonate cytidylyltransferase 2 (248 aa).

Belongs to the KdsB family.

The protein resides in the cytoplasm. The enzyme catalyses 3-deoxy-alpha-D-manno-oct-2-ulosonate + CTP = CMP-3-deoxy-beta-D-manno-octulosonate + diphosphate. The protein operates within nucleotide-sugar biosynthesis; CMP-3-deoxy-D-manno-octulosonate biosynthesis; CMP-3-deoxy-D-manno-octulosonate from 3-deoxy-D-manno-octulosonate and CTP: step 1/1. It participates in bacterial outer membrane biogenesis; lipopolysaccharide biosynthesis. Activates KDO (a required 8-carbon sugar) for incorporation into bacterial lipopolysaccharide in Gram-negative bacteria. The polypeptide is 3-deoxy-manno-octulosonate cytidylyltransferase 2 (Hydrogenovibrio crunogenus (strain DSM 25203 / XCL-2) (Thiomicrospira crunogena)).